The chain runs to 317 residues: Retinol dehydrogenase 7 (317 aa).

33-57 lines the NADP(+) pocket; the sequence is FITGCDSGFGNLLARQLDRRGMRVL. Ser164 contributes to the substrate binding site. Tyr176 (proton acceptor) is an active-site residue.

Belongs to the short-chain dehydrogenases/reductases (SDR) family.

The protein localises to the microsome. It is found in the endoplasmic reticulum. It carries out the reaction all-trans-retinol--[retinol-binding protein] + NAD(+) = all-trans-retinal--[retinol-binding protein] + NADH + H(+). Its pathway is cofactor metabolism; retinol metabolism. Functionally, acts on retinol bound on cellular retinol-binding protein (CRBP). The polypeptide is Retinol dehydrogenase 7 (Rattus norvegicus (Rat)).